A 308-amino-acid chain; its full sequence is HTH-type transcriptional regulator SsuR (308 aa).

The HTH lysR-type domain maps to 1 to 59 (MNFQQLRFVREAVRQNMNLTEVANVLYTSQSGVSKQIKDLEDELGVDIFIRRGKRLTGL). The H-T-H motif DNA-binding region spans 19–38 (LTEVANVLYTSQSGVSKQIK).

It belongs to the LysR transcriptional regulatory family.

Functionally, transcriptional regulator that is essential for the utilization of a number of organic sulfur sources of either environmental or human origin. Required for aliphatic sulfonate utilization. Binds to DNA at target promoter regions. Targets include the ssuDBC operon, the tauABC operon, three tauD-type genes and atsA. In Burkholderia cenocepacia (strain ATCC BAA-245 / DSM 16553 / LMG 16656 / NCTC 13227 / J2315 / CF5610) (Burkholderia cepacia (strain J2315)), this protein is HTH-type transcriptional regulator SsuR.